Consider the following 226-residue polypeptide: Exosome complex component Rrp4 (226 aa).

The 75-residue stretch at 61-135 (NDLVIGKVNS…RDPLVSISDR (75 aa)) folds into the S1 motif domain. The KH domain maps to 141–200 (DSGVLMEISPSKVPRLIGKKGSMIQMIEEATDAAVTIGQNGWVVVSCESPEGLLKAKKAI).

It belongs to the RRP4 family. As to quaternary structure, component of the archaeal exosome complex. Forms a trimer of Rrp4 and/or Csl4 subunits. The trimer associates with a hexameric ring-like arrangement composed of 3 Rrp41-Rrp42 heterodimers.

It is found in the cytoplasm. In terms of biological role, non-catalytic component of the exosome, which is a complex involved in RNA degradation. Increases the RNA binding and the efficiency of RNA degradation. Confers strong poly(A) specificity to the exosome. This is Exosome complex component Rrp4 from Nitrosopumilus maritimus (strain SCM1).